We begin with the raw amino-acid sequence, 172 residues long: Acidic proline-rich protein PRP25 (172 aa).

The first 16 residues, Met1–Ala16, serve as a signal peptide directing secretion. The interval Glu22 to Pro172 is disordered. Over residues Gln32–Pro44 the composition is skewed to pro residues. Positions Gly57–Lys67 are enriched in low complexity. Composition is skewed to pro residues over residues Pro68–Lys137 and Gln145–Pro172.

The protein localises to the secreted. This is Acidic proline-rich protein PRP25 from Rattus norvegicus (Rat).